Consider the following 429-residue polypeptide: Adenylosuccinate synthetase (429 aa).

Residues G12–K18 and G40–T42 each bind GTP. Residue D13 is the Proton acceptor of the active site. D13 and G40 together coordinate Mg(2+). Residues D13–K16, N38–H41, T128, R142, Q223, T238, and R302 each bind IMP. The active-site Proton donor is H41. V298 to R304 contacts substrate. GTP contacts are provided by residues R304, K330–D332, and G412–G414.

This sequence belongs to the adenylosuccinate synthetase family. In terms of assembly, homodimer. Requires Mg(2+) as cofactor.

It localises to the cytoplasm. The enzyme catalyses IMP + L-aspartate + GTP = N(6)-(1,2-dicarboxyethyl)-AMP + GDP + phosphate + 2 H(+). It functions in the pathway purine metabolism; AMP biosynthesis via de novo pathway; AMP from IMP: step 1/2. Its function is as follows. Plays an important role in the de novo pathway of purine nucleotide biosynthesis. Catalyzes the first committed step in the biosynthesis of AMP from IMP. The chain is Adenylosuccinate synthetase from Corynebacterium urealyticum (strain ATCC 43042 / DSM 7109).